A 517-amino-acid polypeptide reads, in one-letter code: Glutamyl-tRNA(Gln) amidotransferase subunit A, mitochondrial (517 aa).

Residues Lys58 and Ser131 each act as charge relay system in the active site. Residues Phe106–Ser132 are disordered. Ser155 (acyl-ester intermediate) is an active-site residue.

This sequence belongs to the amidase family. GatA subfamily. Subunit of the heterotrimeric GatCAB amidotransferase (AdT) complex, composed of A, B and C subunits.

It is found in the mitochondrion. It catalyses the reaction L-glutamyl-tRNA(Gln) + L-glutamine + ATP + H2O = L-glutaminyl-tRNA(Gln) + L-glutamate + ADP + phosphate + H(+). Functionally, allows the formation of correctly charged Gln-tRNA(Gln) through the transamidation of misacylated Glu-tRNA(Gln) in the mitochondria. The reaction takes place in the presence of glutamine and ATP through an activated gamma-phospho-Glu-tRNA(Gln). The sequence is that of Glutamyl-tRNA(Gln) amidotransferase subunit A, mitochondrial from Pyricularia oryzae (strain 70-15 / ATCC MYA-4617 / FGSC 8958) (Rice blast fungus).